Consider the following 380-residue polypeptide: Phospho-N-acetylmuramoyl-pentapeptide-transferase (380 aa).

The next 9 membrane-spanning stretches (helical) occupy residues 25–45 (RAAAAFVTALLVSFILGPAII), 70–90 (TTPTMGGLIILAATFAPVLLW), 98–118 (VLLAMAVTAWMGVIGFLDDYL), 142–162 (VLCGLGLGAYLLLSPISTLPG), 173–193 (VLVVPAVAWAAWLYIPWVTFI), 209–229 (GLSSGLVAIAVLTLGLFAYVL), 245–265 (GAGELTVFCAAVVGACIGFLW), 272–294 (QVFMGDTGSLALGGAVGAIAILL), and 357–377 (QVVVRFWIIGILCAILALSTL).

It belongs to the glycosyltransferase 4 family. MraY subfamily. Mg(2+) serves as cofactor.

The protein resides in the cell inner membrane. The enzyme catalyses UDP-N-acetyl-alpha-D-muramoyl-L-alanyl-gamma-D-glutamyl-meso-2,6-diaminopimeloyl-D-alanyl-D-alanine + di-trans,octa-cis-undecaprenyl phosphate = di-trans,octa-cis-undecaprenyl diphospho-N-acetyl-alpha-D-muramoyl-L-alanyl-D-glutamyl-meso-2,6-diaminopimeloyl-D-alanyl-D-alanine + UMP. It functions in the pathway cell wall biogenesis; peptidoglycan biosynthesis. Catalyzes the initial step of the lipid cycle reactions in the biosynthesis of the cell wall peptidoglycan: transfers peptidoglycan precursor phospho-MurNAc-pentapeptide from UDP-MurNAc-pentapeptide onto the lipid carrier undecaprenyl phosphate, yielding undecaprenyl-pyrophosphoryl-MurNAc-pentapeptide, known as lipid I. The protein is Phospho-N-acetylmuramoyl-pentapeptide-transferase of Gemmatimonas aurantiaca (strain DSM 14586 / JCM 11422 / NBRC 100505 / T-27).